A 711-amino-acid polypeptide reads, in one-letter code: Polyribonucleotide nucleotidyltransferase (711 aa).

Mg(2+) contacts are provided by Asp-490 and Asp-496. The KH domain occupies 556–615 (PRIETMQVPTDKIREVIGSGGKVIREIVEVSGAKVDINDDGVIKIASANGEAIQKAYDMI). The S1 motif domain maps to 625 to 693 (GAVYTGKVVK…DRGKVRLSMK (69 aa)).

Belongs to the polyribonucleotide nucleotidyltransferase family. Requires Mg(2+) as cofactor.

It localises to the cytoplasm. It carries out the reaction RNA(n+1) + phosphate = RNA(n) + a ribonucleoside 5'-diphosphate. Its function is as follows. Involved in mRNA degradation. Catalyzes the phosphorolysis of single-stranded polyribonucleotides processively in the 3'- to 5'-direction. This chain is Polyribonucleotide nucleotidyltransferase, found in Ruegeria sp. (strain TM1040) (Silicibacter sp.).